The following is a 750-amino-acid chain: Eukaryotic translation initiation factor 3 subunit B (750 aa).

An RRM domain is found at Thr-42–Asp-128. WD repeat units lie at residues Asp-195–Arg-234, Pro-236–Ser-292, Ser-309–Lys-348, and Leu-519–Glu-562.

The protein belongs to the eIF-3 subunit B family. As to quaternary structure, component of the eukaryotic translation initiation factor 3 (eIF-3) complex.

The protein localises to the cytoplasm. Its function is as follows. RNA-binding component of the eukaryotic translation initiation factor 3 (eIF-3) complex, which is involved in protein synthesis of a specialized repertoire of mRNAs and, together with other initiation factors, stimulates binding of mRNA and methionyl-tRNAi to the 40S ribosome. The eIF-3 complex specifically targets and initiates translation of a subset of mRNAs involved in cell proliferation. This is Eukaryotic translation initiation factor 3 subunit B from Chaetomium globosum (strain ATCC 6205 / CBS 148.51 / DSM 1962 / NBRC 6347 / NRRL 1970) (Soil fungus).